A 465-amino-acid chain; its full sequence is Intraflagellar transport protein 54 (465 aa).

Disordered stretches follow at residues 119–301 and 347–366; these read VRSN…GFTM and LHGDGSKKPTGLSTQRDKKP. The stretch at 144-207 forms a coiled coil; that stretch reads LEALAREKAE…KQKQQQQQQQ (64 aa). Residues 146-198 show a composition bias toward basic and acidic residues; that stretch reads ALAREKAEKERQRREQEQQERERKERERQEKEREEREKHELESRERAEAEQWK. Over residues 199-220 the composition is skewed to low complexity; sequence QKQQQQQQQQQSAISPQKSPPK. Residues 222–242 are compositionally biased toward basic and acidic residues; the sequence is RFADDDKTRVEEHQPVIERPH.

This sequence belongs to the TRAF3IP1 family.

Its subcellular location is the cell projection. It is found in the cilium. It localises to the flagellum. The protein resides in the cytoplasm. The protein localises to the cytoskeleton. Its subcellular location is the flagellum axoneme. It is found in the flagellum basal body. Component of the intraflagellar transport complex B (IFT-B) involved in flagellar assembly. The sequence is that of Intraflagellar transport protein 54 from Giardia intestinalis (strain ATCC 50803 / WB clone C6) (Giardia lamblia).